A 600-amino-acid chain; its full sequence is NADH-quinone oxidoreductase subunit C/D (600 aa).

Residues 1-190 (MVNNMTDLTA…SPFELTKAKQ (190 aa)) form an NADH dehydrogenase I subunit C region. The segment at 214–600 (DFMFLNLGPN…IDFVMSDVDR (387 aa)) is NADH dehydrogenase I subunit D.

The protein in the N-terminal section; belongs to the complex I 30 kDa subunit family. It in the C-terminal section; belongs to the complex I 49 kDa subunit family. NDH-1 is composed of 13 different subunits. Subunits NuoB, CD, E, F, and G constitute the peripheral sector of the complex.

It is found in the cell inner membrane. The enzyme catalyses a quinone + NADH + 5 H(+)(in) = a quinol + NAD(+) + 4 H(+)(out). NDH-1 shuttles electrons from NADH, via FMN and iron-sulfur (Fe-S) centers, to quinones in the respiratory chain. The immediate electron acceptor for the enzyme in this species is believed to be ubiquinone. Couples the redox reaction to proton translocation (for every two electrons transferred, four hydrogen ions are translocated across the cytoplasmic membrane), and thus conserves the redox energy in a proton gradient. In Escherichia coli (strain ATCC 8739 / DSM 1576 / NBRC 3972 / NCIMB 8545 / WDCM 00012 / Crooks), this protein is NADH-quinone oxidoreductase subunit C/D.